The sequence spans 226 residues: MSAFVLGSTGLVGLQILKVLDSSTAFKKVSTVSRRLPSVTSGKINSIEKKESEEWPAIIEKEAKDYSAFFSAFGTTRAAAGSADNFKKIDYGINYEAAKAAKAAGVETFVLVSTIGANAQSSFLYLQVKGQLEEDIIALKFPRTIILRPGILLGERETSKGLLNNLSVGVLKYLHGTPLTFLGNPIFGAEVAQIAVNAAQESFEKGDEPVVKFYEARELTELYKKL.

The transit peptide at 1–43 directs the protein to the mitochondrion; it reads MSAFVLGSTGLVGLQILKVLDSSTAFKKVSTVSRRLPSVTSGK.

The protein belongs to the FMP52 family.

It localises to the mitochondrion outer membrane. The protein is Protein FMP52-1, mitochondrial (FMP521) of Scheffersomyces stipitis (strain ATCC 58785 / CBS 6054 / NBRC 10063 / NRRL Y-11545) (Yeast).